We begin with the raw amino-acid sequence, 993 residues long: Ephrin type-B receptor 3 (993 aa).

The first 29 residues, 1–29 (MAGARPPPGLLPLLAPLLLPLLLPAGCWA), serve as a signal peptide directing secretion. Topologically, residues 30–554 (LEETLMDTKW…AQQLQEQLPL (525 aa)) are extracellular. The Eph LBD domain occupies 31 to 209 (EETLMDTKWV…FYKKCASTTA (179 aa)). An intrachain disulfide couples C73 to C191. Fibronectin type-III domains lie at 331–446 (VPSP…TNQA) and 447–540 (APSE…TTSE). N343 and N440 each carry an N-linked (GlcNAc...) asparagine glycan. A helical membrane pass occupies residues 555-575 (IVGSTVAGFVFMVVVVVIALV). Residues 576-993 (CLRKQRHGPD…QMNQTLPVQV (418 aa)) lie on the Cytoplasmic side of the membrane. The residue at position 609 (Y609) is a Phosphotyrosine; by autocatalysis. The Protein kinase domain occupies 628-891 (VKIEEVIGAG…QIVNTLDKLI (264 aa)). ATP is bound by residues 634–642 (IGAGEFGEV) and K660. The Proton acceptor role is filled by D753. Residues 920-984 (TTFTTVGDWL…LCSIQDMRLQ (65 aa)) form the SAM domain. Positions 991 to 993 (VQV) match the PDZ-binding motif.

The protein belongs to the protein kinase superfamily. Tyr protein kinase family. Ephrin receptor subfamily. As to quaternary structure, heterotetramer upon binding of the ligand. The heterotetramer is composed of an ephrin dimer and a receptor dimer. Oligomerization is probably required to induce biological responses. In terms of processing, phosphorylated. Autophosphorylates upon ligand-binding. Autophosphorylation on Tyr-609 is required for interaction with SH2 domain-containing proteins. Ubiquitinated by RNF186, mainly through 'Lys-48' and 'Lys-63'-linked polyubiquitin chains. As to expression, expressed in cells of the retinal ganglion cell layer during retinal axon guidance to the optic disk. Expressed by Paneth and progenitor cells in the crypts of the intestinal epithelium (at protein level). Expressed in myogenic progenitor cells.

The protein resides in the cell membrane. The protein localises to the cell projection. It is found in the dendrite. The enzyme catalyses L-tyrosyl-[protein] + ATP = O-phospho-L-tyrosyl-[protein] + ADP + H(+). In terms of biological role, receptor tyrosine kinase which binds promiscuously transmembrane ephrin-B family ligands residing on adjacent cells, leading to contact-dependent bidirectional signaling into neighboring cells. The signaling pathway downstream of the receptor is referred to as forward signaling while the signaling pathway downstream of the ephrin ligand is referred to as reverse signaling. Generally has an overlapping and redundant function with EPHB2. Like EPHB2, functions in axon guidance during development regulating for instance the neurons forming the corpus callosum and the anterior commissure, 2 major interhemispheric connections between the temporal lobes of the cerebral cortex. In addition to its role in axon guidance also plays an important redundant role with other ephrin-B receptors in development and maturation of dendritic spines and the formation of excitatory synapses. Controls other aspects of development through regulation of cell migration and positioning. This includes angiogenesis, palate development and thymic epithelium development for instance. Forward and reverse signaling through the EFNB2/EPHB3 complex also regulate migration and adhesion of cells that tubularize the urethra and septate the cloaca. Finally, plays an important role in intestinal epithelium differentiation segregating progenitor from differentiated cells in the crypt. The polypeptide is Ephrin type-B receptor 3 (Ephb3) (Mus musculus (Mouse)).